Consider the following 310-residue polypeptide: MSRPSAPRGRTELRSIHERGHERGSAGVGRTALATAWIRAGESERPDRLFDDWLAPAFVAAAGDALPLIPPDAGGRLGALAEMMNAYLAVRTRFFDDELLAAAEAGVRQVVLLAAGLDSRAFRLPWPAGTRLFEVDRPDILAFKEQVLAAGETGPRCERHAVSADLTEDWADEILDAGFRPAEPTAWLAEGIIVYLSAEEAERLLTDVTRLSAPGSRLALEDAKGLAEEMVEEARNIPPLGEFADLWKGGLEGASPAWLGDHGWRGREIDSTTVATELRRPIPAEMPVAGYFVTAQRAVGERAEGERAEG.

The interval 1-28 is disordered; that stretch reads MSRPSAPRGRTELRSIHERGHERGSAGV. Over residues 9-24 the composition is skewed to basic and acidic residues; that stretch reads GRTELRSIHERGHERG. Residues Asp136 and 165–166 each bind S-adenosyl-L-methionine; that span reads DL.

It belongs to the UPF0677 family.

Exhibits S-adenosyl-L-methionine-dependent methyltransferase activity. The chain is Putative S-adenosyl-L-methionine-dependent methyltransferase Franean1_4929 from Parafrankia sp. (strain EAN1pec).